The sequence spans 103 residues: Small ribosomal subunit protein uS10 (103 aa).

The protein belongs to the universal ribosomal protein uS10 family. As to quaternary structure, part of the 30S ribosomal subunit.

In terms of biological role, involved in the binding of tRNA to the ribosomes. The protein is Small ribosomal subunit protein uS10 of Chlorobium limicola (strain DSM 245 / NBRC 103803 / 6330).